Consider the following 133-residue polypeptide: ATP synthase epsilon chain (133 aa).

A disordered region spans residues 81–110; that stretch reads AAERPEQIDTERARKAKERAEQRLASEHVD.

Belongs to the ATPase epsilon chain family. F-type ATPases have 2 components, CF(1) - the catalytic core - and CF(0) - the membrane proton channel. CF(1) has five subunits: alpha(3), beta(3), gamma(1), delta(1), epsilon(1). CF(0) has three main subunits: a, b and c.

The protein localises to the cell membrane. Produces ATP from ADP in the presence of a proton gradient across the membrane. The sequence is that of ATP synthase epsilon chain from Shouchella clausii (strain KSM-K16) (Alkalihalobacillus clausii).